Here is a 323-residue protein sequence, read N- to C-terminus: Aldo-keto reductase family 1 member C23-like protein (323 aa).

Residue 20-24 participates in NADP(+) binding; sequence GFGTY. K31 lines the substrate pocket. D50 provides a ligand contact to NADP(+). Residue Y55 is the Proton donor of the active site. Residue H117 coordinates substrate. NADP(+)-binding positions include 166–167, Q190, 216–222, and 270–280; these read SN, YGALGTQ, and KSYNEKRIKEN.

This sequence belongs to the aldo/keto reductase family. As to quaternary structure, monomer. Detected in endometrium surface epithelium (at protein level). Detected in endometrium.

It localises to the cytoplasm. In terms of biological role, NADP-dependent oxidoreductase involved in steroid metabolism. May act on various hydroxysteroids. This chain is Aldo-keto reductase family 1 member C23-like protein (PGFS), found in Equus caballus (Horse).